A 277-amino-acid chain; its full sequence is Shikimate dehydrogenase (NADP(+)) (277 aa).

Shikimate is bound by residues 15–17 (SLS) and Thr-62. Lys-66 acts as the Proton acceptor in catalysis. Positions 87 and 102 each coordinate shikimate. NADP(+) is bound by residues 127–131 (GAGGA), 151–156 (NRTVDK), and Ile-219. Residue Tyr-221 participates in shikimate binding. Residue Gly-242 participates in NADP(+) binding.

Belongs to the shikimate dehydrogenase family. In terms of assembly, homodimer.

The enzyme catalyses shikimate + NADP(+) = 3-dehydroshikimate + NADPH + H(+). It functions in the pathway metabolic intermediate biosynthesis; chorismate biosynthesis; chorismate from D-erythrose 4-phosphate and phosphoenolpyruvate: step 4/7. Functionally, involved in the biosynthesis of the chorismate, which leads to the biosynthesis of aromatic amino acids. Catalyzes the reversible NADPH linked reduction of 3-dehydroshikimate (DHSA) to yield shikimate (SA). The sequence is that of Shikimate dehydrogenase (NADP(+)) from Bacillus thuringiensis subsp. konkukian (strain 97-27).